The following is a 74-amino-acid chain: Cytochrome c oxidase subunit 2 (74 aa).

The Mitochondrial intermembrane segment spans residues 1 to 14; it reads MAHPMQLGFQDAAS. The helical transmembrane segment at 15-45 threads the bilayer; that stretch reads PVMEELLHFHDHALMIVFLISTAVLYIIVVT. The Mitochondrial matrix portion of the chain corresponds to 46–74; sequence VTTKLTDKYVLDAQEIEMVWTIMPAVVLI.

Belongs to the cytochrome c oxidase subunit 2 family. Component of the cytochrome c oxidase (complex IV, CIV), a multisubunit enzyme composed of 14 subunits. The complex is composed of a catalytic core of 3 subunits MT-CO1, MT-CO2 and MT-CO3, encoded in the mitochondrial DNA, and 11 supernumerary subunits COX4I, COX5A, COX5B, COX6A, COX6B, COX6C, COX7A, COX7B, COX7C, COX8 and NDUFA4, which are encoded in the nuclear genome. The complex exists as a monomer or a dimer and forms supercomplexes (SCs) in the inner mitochondrial membrane with NADH-ubiquinone oxidoreductase (complex I, CI) and ubiquinol-cytochrome c oxidoreductase (cytochrome b-c1 complex, complex III, CIII), resulting in different assemblies (supercomplex SCI(1)III(2)IV(1) and megacomplex MCI(2)III(2)IV(2)). Found in a complex with TMEM177, COA6, COX18, COX20, SCO1 and SCO2. Interacts with TMEM177 in a COX20-dependent manner. Interacts with COX20. Interacts with COX16. It depends on Cu cation as a cofactor.

It is found in the mitochondrion inner membrane. The catalysed reaction is 4 Fe(II)-[cytochrome c] + O2 + 8 H(+)(in) = 4 Fe(III)-[cytochrome c] + 2 H2O + 4 H(+)(out). Component of the cytochrome c oxidase, the last enzyme in the mitochondrial electron transport chain which drives oxidative phosphorylation. The respiratory chain contains 3 multisubunit complexes succinate dehydrogenase (complex II, CII), ubiquinol-cytochrome c oxidoreductase (cytochrome b-c1 complex, complex III, CIII) and cytochrome c oxidase (complex IV, CIV), that cooperate to transfer electrons derived from NADH and succinate to molecular oxygen, creating an electrochemical gradient over the inner membrane that drives transmembrane transport and the ATP synthase. Cytochrome c oxidase is the component of the respiratory chain that catalyzes the reduction of oxygen to water. Electrons originating from reduced cytochrome c in the intermembrane space (IMS) are transferred via the dinuclear copper A center (CU(A)) of subunit 2 and heme A of subunit 1 to the active site in subunit 1, a binuclear center (BNC) formed by heme A3 and copper B (CU(B)). The BNC reduces molecular oxygen to 2 water molecules using 4 electrons from cytochrome c in the IMS and 4 protons from the mitochondrial matrix. This Amia calva (Bowfin) protein is Cytochrome c oxidase subunit 2 (mt-co2).